Here is a 73-residue protein sequence, read N- to C-terminus: Putative beta-defensin 108A (73 aa).

The N-terminal stretch at Met-1 to Gly-22 is a signal peptide. Disulfide bonds link Cys-28/Cys-55, Cys-35/Cys-49, and Cys-39/Cys-56.

It belongs to the beta-defensin family.

Its subcellular location is the secreted. Functionally, has antibacterial activity. In Homo sapiens (Human), this protein is Putative beta-defensin 108A.